The sequence spans 54 residues: Large ribosomal subunit protein bL33C (54 aa).

The protein belongs to the bacterial ribosomal protein bL33 family.

The polypeptide is Large ribosomal subunit protein bL33C (rpmG3) (Streptomyces coelicolor (strain ATCC BAA-471 / A3(2) / M145)).